The following is a 389-amino-acid chain: Leucine aminopeptidase 1 (389 aa).

The signal sequence occupies residues 1–18; sequence MKSAALLLPLYAAAFAAA. Residues 19 to 89 constitute a propeptide that is removed on maturation; it reads AFHHEHAQAV…TLKRRINAAS (71 aa). An N-linked (GlcNAc...) asparagine glycan is attached at asparagine 99. Positions 188, 207, 246, and 273 each coordinate Zn(2+). Cysteine 322 and cysteine 326 are joined by a disulfide. Zn(2+) is bound at residue histidine 355.

Belongs to the peptidase M28 family. M28E subfamily. In terms of assembly, monomer. Requires Zn(2+) as cofactor.

The protein resides in the secreted. In terms of biological role, extracellular aminopeptidase that allows assimilation of proteinaceous substrates. The polypeptide is Leucine aminopeptidase 1 (lap1) (Pyrenophora teres f. teres (strain 0-1) (Barley net blotch fungus)).